We begin with the raw amino-acid sequence, 308 residues long: MTTSLRPAPFGRVLTAMVTPFTADGALDLDGAARLATYLVDHGNDGLVISGTTGESPTTTDDEKERLLRAVLDAVGDRATVVAGVGTNDTRHTIELAQRAEKAGAHGLLVVTPYYSKPPQAGLLAHFRQVADATGLPVMLYDIPGRTGTAIEPETMVRLAEHERIVAVKDAKGDFEASSWVLARTDLAYYSGDDKNTLPLLAIGAVGVVGVPTHVFGTQTGAMIAAYLRGDVDGALALHRQLLPVFTGFFRTQGVILAKAALRLAGLPGGPVRPPLVDATAEQVARLREDMAAAGFTEFAEGAEERRG.

Pyruvate is bound at residue threonine 53. Tyrosine 141 acts as the Proton donor/acceptor in catalysis. Lysine 169 serves as the catalytic Schiff-base intermediate with substrate. Valine 209 provides a ligand contact to pyruvate.

This sequence belongs to the DapA family. As to quaternary structure, homotetramer; dimer of dimers.

Its subcellular location is the cytoplasm. The catalysed reaction is L-aspartate 4-semialdehyde + pyruvate = (2S,4S)-4-hydroxy-2,3,4,5-tetrahydrodipicolinate + H2O + H(+). It participates in amino-acid biosynthesis; L-lysine biosynthesis via DAP pathway; (S)-tetrahydrodipicolinate from L-aspartate: step 3/4. Its function is as follows. Catalyzes the condensation of (S)-aspartate-beta-semialdehyde [(S)-ASA] and pyruvate to 4-hydroxy-tetrahydrodipicolinate (HTPA). The sequence is that of 4-hydroxy-tetrahydrodipicolinate synthase from Acidothermus cellulolyticus (strain ATCC 43068 / DSM 8971 / 11B).